Here is a 149-residue protein sequence, read N- to C-terminus: Alpha-crystallin A chain (149 aa).

Positions Leu-41–Pro-149 constitute a sHSP domain. Zn(2+)-binding residues include His-89, Glu-91, His-96, and His-143.

This sequence belongs to the small heat shock protein (HSP20) family. As to quaternary structure, heteropolymer composed of three CRYAA and one CRYAB subunits. Inter-subunit bridging via zinc ions enhances stability, which is crucial as there is no protein turn over in the lens. Can also form homodimers and homotetramers (dimers of dimers) which serve as the building blocks of homooligomers. Within homooligomers, the zinc-binding motif is created from residues of 3 different molecules. His-89 and Glu-91 from one molecule are ligands of the zinc ion, and His-96 and His-143 residues from additional molecules complete the site with tetrahedral coordination geometry. Part of a complex required for lens intermediate filament formation composed of BFSP1, BFSP2 and CRYAA.

It localises to the cytoplasm. The protein localises to the nucleus. Its function is as follows. Contributes to the transparency and refractive index of the lens. May act as a chaperone, preventing aggregation of various proteins under a wide range of stress conditions. The protein is Alpha-crystallin A chain (CRYAA) of Columba livia (Rock dove).